A 567-amino-acid polypeptide reads, in one-letter code: R-linalool synthase QH1, chloroplastic (567 aa).

The N-terminal 24 residues, 1 to 24 (GNAYMRIYSTKTTRITANATVNAA), are a transit peptide targeting the chloroplast. 5 residues coordinate (2E)-geranyl diphosphate: Arg-282, Asp-319, Asp-323, Arg-460, and Asp-463. 2 residues coordinate Mg(2+): Asp-319 and Asp-323. Positions 319–323 (DDVYD) match the DDXXD motif motif. Residues Asp-463, Thr-467, and Glu-471 each contribute to the Mg(2+) site.

It belongs to the terpene synthase family. Tpsb subfamily. It depends on Mg(2+) as a cofactor. As to expression, highly expressed in leaves and lower levels in inflorescences. Not detected in stems, stem epidermis, stem stele or roots.

Its subcellular location is the plastid. It localises to the chloroplast. The catalysed reaction is (2E)-geranyl diphosphate + H2O = (R)-linalool + diphosphate. The protein operates within secondary metabolite biosynthesis; terpenoid biosynthesis. In terms of biological role, monoterpene synthase that catalyzes the formation of (3R)-linalool from geranyl diphosphate, but not from isopentenyl diphosphate, dimethylallyl diphosphate, chrysanthemyl diphosphate, farnesyl diphosphate, (+)-copalyl diphosphate or geranylgeranyl diphosphate. In Artemisia annua (Sweet wormwood), this protein is R-linalool synthase QH1, chloroplastic (QH1).